The primary structure comprises 44 residues: SGPWMCYPGYAFKVPALPGCRPVLLLQCNGSQVPEAVLRDCCQQ.

Cys-20 and Cys-41 form a disulfide bridge.

This sequence belongs to the protease inhibitor I6 (cereal trypsin/alpha-amylase inhibitor) family. Homodimer. The disulfide bonds are essential for the inhibitor activity. Endosperm.

The protein localises to the secreted. Alpha-amylase inhibitor. In Triticum aestivum (Wheat), this protein is Alpha-amylase inhibitor WDAI-3 (IHA-B1-2).